Reading from the N-terminus, the 687-residue chain is Guanine-nucleotide exchange factor YEL1 (687 aa).

Positions 14–27 are enriched in polar residues; sequence YGVSQKGYNDNFSE. Disordered stretches follow at residues 14–35 and 63–97; these read YGVS…LHGS and AAND…TDQN. Residues 57–264 enclose the SEC7 domain; sequence ILQNKEAAND…SEYYKTLNET (208 aa). Low complexity predominate over residues 73–83; the sequence is TTDTATAGTGT. Thr-290 carries the post-translational modification Phosphothreonine. A phosphoserine mark is found at Ser-293 and Ser-299. The PH domain maps to 412–551; that stretch reads TSRRTSLSYL…DCINFWAGRI (140 aa).

It belongs to the YEL1 family.

It localises to the cytoplasm. Its subcellular location is the cell membrane. It is found in the bud neck. The protein resides in the bud tip. Guanine nucleotide exchange factor for ARF3 required for localization of ARF3 to the bud neck and tip and involved in actin patch polarization. The sequence is that of Guanine-nucleotide exchange factor YEL1 (YEL1) from Saccharomyces cerevisiae (strain YJM789) (Baker's yeast).